A 318-amino-acid chain; its full sequence is Ubiquitin-like domain-containing CTD phosphatase 1 (318 aa).

A Ubiquitin-like domain is found at 3–81 (LSLIIKWGGQ…IMMMGTREES (79 aa)). The 162-residue stretch at 133–294 (PREGKKLLVL…VKLSQYLKEI (162 aa)) folds into the FCP1 homology domain. Asp-143, Asp-145, and Asp-253 together coordinate Mg(2+).

Requires Mg(2+) as cofactor.

The protein localises to the nucleus. The enzyme catalyses O-phospho-L-seryl-[protein] + H2O = L-seryl-[protein] + phosphate. The catalysed reaction is O-phospho-L-threonyl-[protein] + H2O = L-threonyl-[protein] + phosphate. In terms of biological role, dephosphorylates 26S nuclear proteasomes, thereby decreasing their proteolytic activity. Recruited to the 19S regulatory particle of the 26S proteasome where it dephosphorylates 19S component psmc2 which impairs psmc2 ATPase activity and disrupts 26S proteasome assembly. Has also been reported to stimulate the proteolytic activity of the 26S proteasome. The sequence is that of Ubiquitin-like domain-containing CTD phosphatase 1 (ublcp1) from Xenopus laevis (African clawed frog).